The sequence spans 160 residues: Large ribosomal subunit protein uL22c (160 aa).

The protein belongs to the universal ribosomal protein uL22 family. Part of the 50S ribosomal subunit.

It is found in the plastid. It localises to the chloroplast. Functionally, this protein binds specifically to 23S rRNA. Its function is as follows. The globular domain of the protein is located near the polypeptide exit tunnel on the outside of the subunit, while an extended beta-hairpin is found that lines the wall of the exit tunnel in the center of the 70S ribosome. The chain is Large ribosomal subunit protein uL22c (rpl22) from Panax ginseng (Korean ginseng).